A 136-amino-acid polypeptide reads, in one-letter code: uncharacterized protein (136 aa).

2 helical membrane-spanning segments follow: residues 36–56 (FLLTNLVFLFVAFLILIIYLI) and 63–83 (FAFAFIATIVFIIFYNILFLS).

The protein localises to the cell membrane. This is an uncharacterized protein from Mycoplasma pneumoniae (strain ATCC 29342 / M129 / Subtype 1) (Mycoplasmoides pneumoniae).